The sequence spans 162 residues: Transcriptional repressor NrdR (162 aa).

Residues 1–21 (MNCPDCGDEQTRVIDTETSAD) form a disordered region. A zinc finger lies at 3-34 (CPDCGDEQTRVIDTETSADGTSVRRRRECQRC). Residues 49–139 (LQVKKRNGTI…VYKAFSEPQE (91 aa)) enclose the ATP-cone domain.

This sequence belongs to the NrdR family. Zn(2+) serves as cofactor.

In terms of biological role, negatively regulates transcription of bacterial ribonucleotide reductase nrd genes and operons by binding to NrdR-boxes. This Halorubrum lacusprofundi (strain ATCC 49239 / DSM 5036 / JCM 8891 / ACAM 34) protein is Transcriptional repressor NrdR.